Here is a 285-residue protein sequence, read N- to C-terminus: Probable enoyl-CoA hydratase echA12 (285 aa).

This sequence belongs to the enoyl-CoA hydratase/isomerase family.

The enzyme catalyses a (3S)-3-hydroxyacyl-CoA = a (2E)-enoyl-CoA + H2O. It carries out the reaction a 4-saturated-(3S)-3-hydroxyacyl-CoA = a (3E)-enoyl-CoA + H2O. Functionally, could possibly oxidize fatty acids using specific components. The protein is Probable enoyl-CoA hydratase echA12 (echA12) of Mycobacterium tuberculosis (strain CDC 1551 / Oshkosh).